A 278-amino-acid polypeptide reads, in one-letter code: Probable endonuclease 4 (278 aa).

Zn(2+)-binding residues include His-69, His-109, Glu-145, Asp-179, His-182, His-214, Asp-227, His-229, and Glu-259.

The protein belongs to the AP endonuclease 2 family. Zn(2+) serves as cofactor.

The enzyme catalyses Endonucleolytic cleavage to 5'-phosphooligonucleotide end-products.. Its function is as follows. Endonuclease IV plays a role in DNA repair. It cleaves phosphodiester bonds at apurinic or apyrimidinic (AP) sites, generating a 3'-hydroxyl group and a 5'-terminal sugar phosphate. The sequence is that of Probable endonuclease 4 from Phocaeicola vulgatus (strain ATCC 8482 / DSM 1447 / JCM 5826 / CCUG 4940 / NBRC 14291 / NCTC 11154) (Bacteroides vulgatus).